Reading from the N-terminus, the 394-residue chain is NAD(P)H-quinone oxidoreductase subunit H (394 aa).

Belongs to the complex I 49 kDa subunit family. In terms of assembly, NDH-1 can be composed of about 15 different subunits; different subcomplexes with different compositions have been identified which probably have different functions.

It localises to the cellular thylakoid membrane. The catalysed reaction is a plastoquinone + NADH + (n+1) H(+)(in) = a plastoquinol + NAD(+) + n H(+)(out). The enzyme catalyses a plastoquinone + NADPH + (n+1) H(+)(in) = a plastoquinol + NADP(+) + n H(+)(out). NDH-1 shuttles electrons from an unknown electron donor, via FMN and iron-sulfur (Fe-S) centers, to quinones in the respiratory and/or the photosynthetic chain. The immediate electron acceptor for the enzyme in this species is believed to be plastoquinone. Couples the redox reaction to proton translocation, and thus conserves the redox energy in a proton gradient. Cyanobacterial NDH-1 also plays a role in inorganic carbon-concentration. This is NAD(P)H-quinone oxidoreductase subunit H from Acaryochloris marina (strain MBIC 11017).